The chain runs to 472 residues: Hepatocyte nuclear factor 3-alpha (472 aa).

The fork-head DNA-binding region spans 169 to 260 (AKPPYSYISL…GNMFENGCYL (92 aa)). Residues 269–392 (EKQPGAGGGG…ESQLHLKGDP (124 aa)) are disordered. The span at 273 to 289 (GAGGGGGSGSGGSGAKG) shows a compositional bias: gly residues. Residues Ser307 and Ser331 each carry the phosphoserine modification. Low complexity-rich tracts occupy residues 322-332 (GAPAPGPAASP) and 351-366 (TPAS…GPGA).

Binds DNA as a monomer. Interacts with FOXA2. Interacts with NKX2-1. Interacts with HDAC7. Interacts with the histone H3-H4 heterodimer. Associates with nucleosomes containing histone H2A. Interacts with AR. Interacts with NR0B2. In terms of tissue distribution, highly expressed in prostate and ESR1-positive breast tumors. Overexpressed in esophageal and lung adenocarcinomas.

The protein resides in the nucleus. In terms of biological role, transcription factor that is involved in embryonic development, establishment of tissue-specific gene expression and regulation of gene expression in differentiated tissues. Is thought to act as a 'pioneer' factor opening the compacted chromatin for other proteins through interactions with nucleosomal core histones and thereby replacing linker histones at target enhancer and/or promoter sites. Binds DNA with the consensus sequence 5'-[AC]A[AT]T[AG]TT[GT][AG][CT]T[CT]-3'. Proposed to play a role in translating the epigenetic signatures into cell type-specific enhancer-driven transcriptional programs. Its differential recruitment to chromatin is dependent on distribution of histone H3 methylated at 'Lys-5' (H3K4me2) in estrogen-regulated genes. Involved in the development of multiple endoderm-derived organ systems such as liver, pancreas, lung and prostate; FOXA1 and FOXA2 seem to have at least in part redundant roles. Modulates the transcriptional activity of nuclear hormone receptors. Is involved in ESR1-mediated transcription; required for ESR1 binding to the NKX2-1 promoter in breast cancer cells; binds to the RPRM promoter and is required for the estrogen-induced repression of RPRM. Involved in regulation of apoptosis by inhibiting the expression of BCL2. Involved in cell cycle regulation by activating expression of CDKN1B, alone or in conjunction with BRCA1. Originally described as a transcription activator for a number of liver genes such as AFP, albumin, tyrosine aminotransferase, PEPCK, etc. Interacts with the cis-acting regulatory regions of these genes. Involved in glucose homeostasis. The protein is Hepatocyte nuclear factor 3-alpha (FOXA1) of Homo sapiens (Human).